A 361-amino-acid polypeptide reads, in one-letter code: Peptide chain release factor 1 (361 aa).

The residue at position 238 (Gln-238) is an N5-methylglutamine.

Belongs to the prokaryotic/mitochondrial release factor family. Post-translationally, methylated by PrmC. Methylation increases the termination efficiency of RF1.

Its subcellular location is the cytoplasm. Its function is as follows. Peptide chain release factor 1 directs the termination of translation in response to the peptide chain termination codons UAG and UAA. The chain is Peptide chain release factor 1 from Mesomycoplasma hyopneumoniae (strain J / ATCC 25934 / NCTC 10110) (Mycoplasma hyopneumoniae).